The following is a 102-amino-acid chain: Large ribosomal subunit protein bL21 (102 aa).

Belongs to the bacterial ribosomal protein bL21 family. Part of the 50S ribosomal subunit. Contacts protein L20.

This protein binds to 23S rRNA in the presence of protein L20. This chain is Large ribosomal subunit protein bL21, found in Nitratidesulfovibrio vulgaris (strain DSM 19637 / Miyazaki F) (Desulfovibrio vulgaris).